A 332-amino-acid polypeptide reads, in one-letter code: Probable farnesyl diphosphate synthase (332 aa).

Isopentenyl diphosphate-binding residues include Lys75, Arg78, and His107. Mg(2+)-binding residues include Asp114 and Asp120. Arg125 contributes to the (2E)-geranyl diphosphate binding site. Arg126 serves as a coordination point for isopentenyl diphosphate. 4 residues coordinate (2E)-geranyl diphosphate: Lys208, Ser209, Gln250, and Lys267.

It belongs to the FPP/GGPP synthase family. Mg(2+) serves as cofactor.

It localises to the cytoplasm. It catalyses the reaction isopentenyl diphosphate + (2E)-geranyl diphosphate = (2E,6E)-farnesyl diphosphate + diphosphate. The chain is Probable farnesyl diphosphate synthase (fppS) from Bradyrhizobium diazoefficiens (strain JCM 10833 / BCRC 13528 / IAM 13628 / NBRC 14792 / USDA 110).